The sequence spans 113 residues: Large ribosomal subunit protein bL17 (113 aa).

Belongs to the bacterial ribosomal protein bL17 family. As to quaternary structure, part of the 50S ribosomal subunit. Contacts protein L32.

This Natranaerobius thermophilus (strain ATCC BAA-1301 / DSM 18059 / JW/NM-WN-LF) protein is Large ribosomal subunit protein bL17.